Consider the following 300-residue polypeptide: Protein phosphatase 2C 1 (300 aa).

A PPM-type phosphatase domain is found at 23–298 (IFAASEMQGW…DNMTTILVYL (276 aa)). 4 residues coordinate Mn(2+): D57, G58, D237, and D289.

It belongs to the PP2C family. Mg(2+) serves as cofactor. The cofactor is Mn(2+). The N-terminus is blocked.

The protein localises to the membrane. It carries out the reaction O-phospho-L-seryl-[protein] + H2O = L-seryl-[protein] + phosphate. It catalyses the reaction O-phospho-L-threonyl-[protein] + H2O = L-threonyl-[protein] + phosphate. Its function is as follows. Serine and threonine phosphatase. The chain is Protein phosphatase 2C 1 from Paramecium tetraurelia.